A 123-amino-acid chain; its full sequence is UPF0231 protein plu3616 (123 aa).

Belongs to the UPF0231 family.

The protein is UPF0231 protein plu3616 of Photorhabdus laumondii subsp. laumondii (strain DSM 15139 / CIP 105565 / TT01) (Photorhabdus luminescens subsp. laumondii).